The chain runs to 233 residues: Large ribosomal subunit protein uL1 (233 aa).

It belongs to the universal ribosomal protein uL1 family. Part of the 50S ribosomal subunit.

Functionally, binds directly to 23S rRNA. The L1 stalk is quite mobile in the ribosome, and is involved in E site tRNA release. Protein L1 is also a translational repressor protein, it controls the translation of the L11 operon by binding to its mRNA. This is Large ribosomal subunit protein uL1 from Finegoldia magna (strain ATCC 29328 / DSM 20472 / WAL 2508) (Peptostreptococcus magnus).